The primary structure comprises 682 residues: DNA-directed RNA polymerase subunit beta' (682 aa).

Residues Cys69, Cys71, Cys87, and Cys90 each coordinate Zn(2+). The Mg(2+) site is built by Asp489, Asp491, and Asp493.

Belongs to the RNA polymerase beta' chain family. RpoC1 subfamily. As to quaternary structure, in plastids the minimal PEP RNA polymerase catalytic core is composed of four subunits: alpha, beta, beta', and beta''. When a (nuclear-encoded) sigma factor is associated with the core the holoenzyme is formed, which can initiate transcription. Mg(2+) is required as a cofactor. The cofactor is Zn(2+).

The protein resides in the plastid. Its subcellular location is the chloroplast. The catalysed reaction is RNA(n) + a ribonucleoside 5'-triphosphate = RNA(n+1) + diphosphate. DNA-dependent RNA polymerase catalyzes the transcription of DNA into RNA using the four ribonucleoside triphosphates as substrates. This Brachypodium distachyon (Purple false brome) protein is DNA-directed RNA polymerase subunit beta'.